We begin with the raw amino-acid sequence, 130 residues long: Gonadotropin subunit beta-1 (130 aa).

An N-terminal signal peptide occupies residues 1 to 18; that stretch reads MRMRFVVMVILLPALMMS. Cystine bridges form between cysteine 26–cysteine 74, cysteine 40–cysteine 89, cysteine 51–cysteine 105, cysteine 55–cysteine 107, and cysteine 110–cysteine 117. The N-linked (GlcNAc...) asparagine glycan is linked to asparagine 30.

Belongs to the glycoprotein hormones subunit beta family. In terms of assembly, heterodimer of an alpha and a beta chain.

It localises to the secreted. Involved in gametogenesis and steroidogenesis. The protein is Gonadotropin subunit beta-1 (cgba) of Carassius auratus (Goldfish).